The chain runs to 284 residues: Homeobox protein six1 (284 aa).

The homeobox DNA-binding region spans 124 to 183; it reads GEETSYCFKEKSRGVLREWYAHNPYPSPREKRELAEATGLTTTQVSNWFKNRRQRDRAAE. A disordered region spans residues 168 to 230; it reads VSNWFKNRRQ…SPPQSPDQNS (63 aa). The span at 179 to 190 shows a compositional bias: basic and acidic residues; sequence DRAAEAKERENT. The span at 191–202 shows a compositional bias: low complexity; sequence ENNNTSTNKQNQ.

It belongs to the SIX/Sine oculis homeobox family.

It is found in the nucleus. The protein resides in the cytoplasm. Functionally, transcription factor that is involved in the regulation of cell proliferation, apoptosis and embryonic development. Depending on context, functions as a transcriptional repressor or activator. Required for the normal formation of pre-placodal ectoderm. The chain is Homeobox protein six1 (six1) from Xenopus laevis (African clawed frog).